Consider the following 180-residue polypeptide: Ubiquitin-conjugating enzyme E2 20 (180 aa).

Positions 1–33 (MAAVNGYQGNTPADPPASNGSKQPAAPTKTVDS) are disordered. Residues 35-180 (SVLKRLQSEL…VEKLYKPPSA (146 aa)) enclose the UBC core domain. Cysteine 119 (glycyl thioester intermediate) is an active-site residue.

Belongs to the ubiquitin-conjugating enzyme family. Expressed in all tissues with cell division activities and in mature leaves.

It catalyses the reaction S-ubiquitinyl-[E1 ubiquitin-activating enzyme]-L-cysteine + [E2 ubiquitin-conjugating enzyme]-L-cysteine = [E1 ubiquitin-activating enzyme]-L-cysteine + S-ubiquitinyl-[E2 ubiquitin-conjugating enzyme]-L-cysteine.. Its pathway is protein modification; protein ubiquitination. Its function is as follows. Accepts the ubiquitin from the E1 complex and catalyzes its covalent attachment to other proteins. The chain is Ubiquitin-conjugating enzyme E2 20 (UBC20) from Arabidopsis thaliana (Mouse-ear cress).